The chain runs to 689 residues: Sodium-dependent phosphate transport protein 2B (689 aa).

Residues 1-41 (MAPWPELGDAQPNPDKYLEGAAGQQPTAPDKSKETNKNNTE) are disordered. The Cytoplasmic portion of the chain corresponds to 1 to 100 (MAPWPELGDA…LCVFQGIGRL (100 aa)). Residues 101–121 (ILLLGFLYFFVCSLDILSSAF) traverse the membrane as a helical segment. The Extracellular segment spans residues 122–135 (QLVGGKMAGQFFSN). A helical transmembrane segment spans residues 136-156 (SSIMSNPLLGLVIGVLVTVLV). The Cytoplasmic portion of the chain corresponds to 157 to 212 (QSSSTSTSIVVSMVSSSLLTVRAAIPIIMGANIGTSITNTIVALMQVGDRSEFRRA). The helical transmembrane segment at 213–233 (FAGATVHDFFNWLSVLVLLPV) threads the bilayer. The Extracellular segment spans residues 234–362 (EVATHYLEII…FVNFHLPDLA (129 aa)). 3 N-linked (GlcNAc...) asparagine glycosylation sites follow: N294, N307, and N320. Residues C302 and C349 are joined by a disulfide bond. Residues 363-383 (VGTILLILSLLVLCGCLIMIV) traverse the membrane as a helical segment. The Cytoplasmic portion of the chain corresponds to 384 to 407 (KILGSVLKGQVATVIKKTINTDFP). A helical transmembrane segment spans residues 408–428 (FPFAWLTGYLAILVGAGMTFI). Residues 429–485 (VQSSSVFTSALTPLIGIGVITIERAYPLTLGSNIGTTTTAILAALASPGNALRSSLQ) lie on the Extracellular side of the membrane. Residues 486–506 (IALCHFFFNISGILLWYPIPF) form a helical membrane-spanning segment. Residues 507–525 (TRLPIRMAKGLGNISAKYR) lie on the Cytoplasmic side of the membrane. A helical membrane pass occupies residues 526–546 (WFAVFYLIIFFFLIPLTVFGL). Residues 547-552 (SLAGWR) lie on the Extracellular side of the membrane. A helical transmembrane segment spans residues 553 to 573 (VLVGVGVPVVFIIILVLCLRL). The Cytoplasmic segment spans residues 574–687 (LQSRCPRVLP…PASDSKTECT (114 aa)).

Belongs to the SLC34A transporter family.

Its subcellular location is the apical cell membrane. It catalyses the reaction 3 Na(+)(out) + phosphate(out) = 3 Na(+)(in) + phosphate(in). Its function is as follows. Involved in actively transporting phosphate into cells via Na(+) cotransport. This chain is Sodium-dependent phosphate transport protein 2B (SLC34A2), found in Pongo abelii (Sumatran orangutan).